Consider the following 308-residue polypeptide: MTRSTAHVTVLLEEAVGALAIKADGVYVDATFGRGGHSRRILSELNQNGRLVAVDRDPQAIAAGAEIDDSRFLLVHRAFGELAEAADEAGIRDVDGVLFDVGVSSPQIDDGERGFSFRYDAPLDMRMDTTQGETAAEWLARAEIRDITEVIRNYGEERFAFQIAKKVVAARLEQPIVTTGQFAALVRETVRTREPGQDPATRSFQALRIHINQELRQLEVALPQALELLKPGGRLVVISFHSLEDRIVKNFMRDQSIADAMPKSLPLRADQLPKPKLRLVGRPIKPSAAEIDANPRARSAVMRIAEKL.

S-adenosyl-L-methionine-binding positions include 35–37 (GGH), Asp-55, Phe-79, Asp-100, and Gln-107.

Belongs to the methyltransferase superfamily. RsmH family.

The protein localises to the cytoplasm. The catalysed reaction is cytidine(1402) in 16S rRNA + S-adenosyl-L-methionine = N(4)-methylcytidine(1402) in 16S rRNA + S-adenosyl-L-homocysteine + H(+). In terms of biological role, specifically methylates the N4 position of cytidine in position 1402 (C1402) of 16S rRNA. The sequence is that of Ribosomal RNA small subunit methyltransferase H from Dechloromonas aromatica (strain RCB).